Consider the following 100-residue polypeptide: Urease subunit gamma (100 aa).

It belongs to the urease gamma subunit family. In terms of assembly, heterotrimer of UreA (gamma), UreB (beta) and UreC (alpha) subunits. Three heterotrimers associate to form the active enzyme.

It localises to the cytoplasm. It catalyses the reaction urea + 2 H2O + H(+) = hydrogencarbonate + 2 NH4(+). Its pathway is nitrogen metabolism; urea degradation; CO(2) and NH(3) from urea (urease route): step 1/1. In Staphylococcus saprophyticus subsp. saprophyticus (strain ATCC 15305 / DSM 20229 / NCIMB 8711 / NCTC 7292 / S-41), this protein is Urease subunit gamma.